A 554-amino-acid chain; its full sequence is uncharacterized protein (554 aa).

Residues 1–25 (MSSSIPPRLYDMSPTESKKQEDVSE) are disordered. The residue at position 13 (Ser13) is a Phosphoserine. Transmembrane regions (helical) follow at residues 82–102 (FFVA…TSLI), 120–140 (APYL…VWSL), 149–169 (WAFN…GASP), 171–191 (FASI…NLPV), 210–230 (VMSF…WGLI), and 253–273 (FLFT…LVSV). Ser334 bears the Phosphoserine mark. 6 consecutive transmembrane segments (helical) span residues 364-384 (LAIS…AFPL), 412-432 (SLIV…LVEF), 437-457 (KGTL…STTA), 462-482 (AYLG…GVLY), 497-517 (AVGL…VIAM), and 525-545 (APIF…VFFP).

It belongs to the major facilitator superfamily.

The protein resides in the endoplasmic reticulum. It localises to the membrane. This is an uncharacterized protein from Schizosaccharomyces pombe (strain 972 / ATCC 24843) (Fission yeast).